Here is a 396-residue protein sequence, read N- to C-terminus: Lysophospholipid transporter LplT (396 aa).

The Periplasmic portion of the chain corresponds to 1-17 (MSESVHTNTSLWSKGMK). Residues 18–38 (AVIVAQFLSAFGDNALLFATL) traverse the membrane as a helical segment. The Cytoplasmic segment spans residues 39 to 52 (ALLKAQFYPEWSQP). Residues 53–73 (ILQMVFVGAYILLAPFVGQVA) traverse the membrane as a helical segment. The Periplasmic portion of the chain corresponds to 74-90 (DSFAKGRVMMFANGLKL). A helical membrane pass occupies residues 91 to 111 (LGAASICFGINPFLGYTLVGV). The Cytoplasmic portion of the chain corresponds to 112 to 144 (GAAAYSPAKYGILGELTTGSKLVKANGLMEASA). The chain crosses the membrane as a helical span at residues 145 to 165 (IAAILLGSVAGGVLADWHVLV). Residue alanine 166 is a topological domain, periplasmic. A helical membrane pass occupies residues 167 to 187 (LAACALAYGGAVVANIYIPKL). Over 188-225 (AARPGQSWNLINMTRSFLNACTSLWCNGETRFSLVGTS) the chain is Cytoplasmic. Residues 226 to 246 (LFWGAGVTLRFLLVLWVPVAL) form a helical membrane-spanning segment. At 247-255 (GITDNATPT) the chain is on the periplasmic side. The helical transmembrane segment at 256–276 (YLNAMVAIGIVVGAGAAAKLV) threads the bilayer. The Cytoplasmic segment spans residues 277–279 (TLE). The chain crosses the membrane as a helical span at residues 280 to 300 (TVSRCMPAGILIGVVVPIFSL). Residues 301 to 303 (QHE) lie on the Periplasmic side of the membrane. A helical membrane pass occupies residues 304–324 (LLPAYALLMLIGVLGGFFVVP). The Cytoplasmic portion of the chain corresponds to 325 to 342 (LNALLQERGKKSVGAGNA). The helical transmembrane segment at 343 to 363 (IAVQNLGENSAMLLMLGIYSL) threads the bilayer. The Periplasmic portion of the chain corresponds to 364-365 (AV). Residues 366–386 (MVGIPVVPIGIGFGALFALAI) traverse the membrane as a helical segment. The Cytoplasmic portion of the chain corresponds to 387–396 (TALWIWQRRH).

This sequence belongs to the major facilitator superfamily. LplT (TC 2.A.1.42) family.

Its subcellular location is the cell inner membrane. Its function is as follows. Catalyzes the facilitated diffusion of 2-acyl-glycero-3-phosphoethanolamine (2-acyl-GPE) into the cell. The sequence is that of Lysophospholipid transporter LplT from Shigella flexneri.